A 291-amino-acid chain; its full sequence is MADLDDIKDGKDFRTDQPQKNIPFTLKGCGALDWGMQSRLSRIFNPKTGKTVMLAFDHGYFQGPTTGLERIDINIAPLFEHADVLMCTRGILRSVVPPATNRPVVLRASGANSILAELSNEAVALSMDDAVRLNSCAVAAQVYIGSEYEHQSIKNIIQLVDAGMKVGMPTMAVTGVGKDMVRDQRYFSLATRIAAEMGAQIIKTYYVEKGFERIVAGCPVPIVIAGGKKLPEREALEMCWQAIDQGASGVDMGRNIFQSDHPVAMMKAVQAVVHHNETADRAYELYLSEKQ.

Residue Lys203 is the Schiff-base intermediate with substrate of the active site.

This sequence belongs to the DeoC/FbaB aldolase family. Homodecamer.

It localises to the cytoplasm. The enzyme catalyses dihydroxyacetone phosphate + acetyl-CoA = 3-hydroxy-2,4-dioxopentyl phosphate + CoA. Functionally, involved in the degradation of phospho-AI-2, thereby terminating induction of the lsr operon and closing the AI-2 signaling cycle. Catalyzes the transfer of an acetyl moiety from 3-hydroxy-5-phosphonooxypentane-2,4-dione to CoA to form glycerone phosphate and acetyl-CoA. The polypeptide is 3-hydroxy-5-phosphonooxypentane-2,4-dione thiolase (Escherichia coli (strain K12 / DH10B)).